The primary structure comprises 70 residues: uncharacterized protein (70 aa).

The protein resides in the plastid. This is an uncharacterized protein from Euglena longa (Euglenophycean alga).